A 383-amino-acid chain; its full sequence is Embryonic pepsinogen (383 aa).

The N-terminal stretch at 1–16 is a signal peptide; it reads MRSLALLCAVLALSDG. Positions 76–380 constitute a Peptidase A1 domain; it reads YYGTISIGTP…DRANNRVGLA (305 aa). The active site involves Asp-94. A disulfide bridge links Cys-107 with Cys-112. Residues Asn-132 and Asn-204 are each glycosylated (N-linked (GlcNAc...) asparagine). Cys-267 and Cys-271 are disulfide-bonded. Asp-276 is an active-site residue. Asn-309 carries an N-linked (GlcNAc...) asparagine glycan. Cys-310 and Cys-344 are joined by a disulfide. A glycan (N-linked (GlcNAc...) asparagine) is linked at Asn-350.

Belongs to the peptidase A1 family.

The chain is Embryonic pepsinogen from Gallus gallus (Chicken).